An 865-amino-acid polypeptide reads, in one-letter code: Alanine--tRNA ligase (865 aa).

4 residues coordinate Zn(2+): His568, His572, Cys670, and His674.

It belongs to the class-II aminoacyl-tRNA synthetase family. Zn(2+) is required as a cofactor.

The protein localises to the cytoplasm. The enzyme catalyses tRNA(Ala) + L-alanine + ATP = L-alanyl-tRNA(Ala) + AMP + diphosphate. In terms of biological role, catalyzes the attachment of alanine to tRNA(Ala) in a two-step reaction: alanine is first activated by ATP to form Ala-AMP and then transferred to the acceptor end of tRNA(Ala). Also edits incorrectly charged Ser-tRNA(Ala) and Gly-tRNA(Ala) via its editing domain. The sequence is that of Alanine--tRNA ligase from Vibrio campbellii (strain ATCC BAA-1116).